The sequence spans 860 residues: Probable inorganic carbon transporter subunit DabA (860 aa).

The interval M1–D32 is disordered. Zn(2+)-binding residues include C369, D371, H551, and C566.

Belongs to the inorganic carbon transporter (TC 9.A.2) DabA family. In terms of assembly, forms a complex with DabB. Zn(2+) serves as cofactor.

It is found in the cell inner membrane. Functionally, part of an energy-coupled inorganic carbon pump. In Ralstonia pickettii (strain 12D), this protein is Probable inorganic carbon transporter subunit DabA.